The chain runs to 142 residues: Peptide methionine sulfoxide reductase MsrB (142 aa).

The MsrB domain occupies 2-125; sequence IKKDKNELNE…NSAAIQFIPY (124 aa). C114 serves as the catalytic Nucleophile.

The protein belongs to the MsrB Met sulfoxide reductase family.

It catalyses the reaction L-methionyl-[protein] + [thioredoxin]-disulfide + H2O = L-methionyl-(R)-S-oxide-[protein] + [thioredoxin]-dithiol. The sequence is that of Peptide methionine sulfoxide reductase MsrB from Staphylococcus haemolyticus (strain JCSC1435).